A 111-amino-acid chain; its full sequence is Large ribosomal subunit protein uL23 (111 aa).

This sequence belongs to the universal ribosomal protein uL23 family. As to quaternary structure, part of the 50S ribosomal subunit. Contacts protein L29, and trigger factor when it is bound to the ribosome.

Functionally, one of the early assembly proteins it binds 23S rRNA. One of the proteins that surrounds the polypeptide exit tunnel on the outside of the ribosome. Forms the main docking site for trigger factor binding to the ribosome. In Chlamydia trachomatis serovar A (strain ATCC VR-571B / DSM 19440 / HAR-13), this protein is Large ribosomal subunit protein uL23.